Reading from the N-terminus, the 347-residue chain is DNA-directed RNA polymerase subunit alpha (347 aa).

An alpha N-terminal domain (alpha-NTD) region spans residues 1–226 (MLISQRPTLS…ELFGLARELN (226 aa)). The alpha C-terminal domain (alpha-CTD) stretch occupies residues 241-347 (ADHIASFALP…DQDYAETEQL (107 aa)).

This sequence belongs to the RNA polymerase alpha chain family. In terms of assembly, homodimer. The RNAP catalytic core consists of 2 alpha, 1 beta, 1 beta' and 1 omega subunit. When a sigma factor is associated with the core the holoenzyme is formed, which can initiate transcription.

It carries out the reaction RNA(n) + a ribonucleoside 5'-triphosphate = RNA(n+1) + diphosphate. Functionally, DNA-dependent RNA polymerase catalyzes the transcription of DNA into RNA using the four ribonucleoside triphosphates as substrates. This Mycobacterium ulcerans (strain Agy99) protein is DNA-directed RNA polymerase subunit alpha.